Here is a 316-residue protein sequence, read N- to C-terminus: Pantothenate kinase (316 aa).

95–102 (GSVAVGKS) contacts ATP.

It belongs to the prokaryotic pantothenate kinase family.

It localises to the cytoplasm. The catalysed reaction is (R)-pantothenate + ATP = (R)-4'-phosphopantothenate + ADP + H(+). It participates in cofactor biosynthesis; coenzyme A biosynthesis; CoA from (R)-pantothenate: step 1/5. In Shewanella baltica (strain OS223), this protein is Pantothenate kinase.